The following is a 254-amino-acid chain: RNA polymerase sigma factor SigI8 (254 aa).

The short motif at 61-74 is the Polymerase core binding element; that stretch reads DEYSIALIAFNEAI. The H-T-H motif DNA-binding region spans 209-228; sequence YKELTERFNLCRRTLEKNRK.

The protein belongs to the sigma-70 factor family. SigI subfamily. Interacts with RsgI8.

The protein localises to the cytoplasm. Negatively regulated by the anti-sigma-I factor RsgI8. In terms of biological role, sigma factors are initiation factors that promote the attachment of RNA polymerase to specific initiation sites and are then released. This Acetivibrio thermocellus (strain ATCC 27405 / DSM 1237 / JCM 9322 / NBRC 103400 / NCIMB 10682 / NRRL B-4536 / VPI 7372) (Clostridium thermocellum) protein is RNA polymerase sigma factor SigI8.